The chain runs to 477 residues: Phosphatidylinositol 4-kinase type 2-beta (477 aa).

The disordered stretch occupies residues methionine 1–serine 80. The residue at position 45 (serine 45) is a Phosphoserine. Positions glycine 116 to cysteine 447 constitute a PI3K/PI4K catalytic domain. Residues isoleucine 122–glycine 128 form a G-loop region. ATP is bound by residues serine 129 and lysine 144. The important for substrate binding stretch occupies residues glutamate 149–tyrosine 151. The important for interaction with membranes stretch occupies residues lysine 157–cysteine 170. Residues glutamine 253 to valine 256 and arginine 267 to arginine 268 contribute to the ATP site. The segment at lysine 260–arginine 268 is important for interaction with membranes. The catalytic loop stretch occupies residues arginine 297 to asparagine 305. An activation loop region spans residues alanine 338 to phenylalanine 358. An ATP-binding site is contributed by aspartate 340. The important for interaction with membranes stretch occupies residues tryptophan 353 to tryptophan 362.

The protein belongs to the PI3/PI4-kinase family. Type II PI4K subfamily.

Its subcellular location is the cytoplasm. The protein resides in the cytosol. The protein localises to the golgi apparatus membrane. It localises to the endoplasmic reticulum membrane. It is found in the cell membrane. Its subcellular location is the early endosome membrane. It carries out the reaction a 1,2-diacyl-sn-glycero-3-phospho-(1D-myo-inositol) + ATP = a 1,2-diacyl-sn-glycero-3-phospho-(1D-myo-inositol 4-phosphate) + ADP + H(+). Functionally, together with PI4K2A and the type III PI4Ks (PIK4CA and PIK4CB) it contributes to the overall PI4-kinase activity of the cell. This contribution may be especially significant in plasma membrane, endosomal and Golgi compartments. The phosphorylation of phosphatidylinositol (PI) to PI4P is the first committed step in the generation of phosphatidylinositol 4,5-bisphosphate (PIP2), a precursor of the second messenger inositol 1,4,5-trisphosphate (InsP3). Contributes to the production of InsP3 in stimulated cells and is likely to be involved in the regulation of vesicular trafficking. The polypeptide is Phosphatidylinositol 4-kinase type 2-beta (Pi4k2b) (Rattus norvegicus (Rat)).